A 231-amino-acid polypeptide reads, in one-letter code: NADH-ubiquinone oxidoreductase chain 4 (231 aa).

6 helical membrane-spanning segments follow: residues 1-21, 34-54, 63-85, 89-111, 124-146, and 169-189; these read PIAG…YGII, LFLP…LTCL, IAYS…TPWG, AMAL…NMTY, GLHN…NIAI, and TIII…HMFL.

It belongs to the complex I subunit 4 family.

It localises to the mitochondrion membrane. It carries out the reaction a ubiquinone + NADH + 5 H(+)(in) = a ubiquinol + NAD(+) + 4 H(+)(out). Its function is as follows. Core subunit of the mitochondrial membrane respiratory chain NADH dehydrogenase (Complex I) that is believed to belong to the minimal assembly required for catalysis. Complex I functions in the transfer of electrons from NADH to the respiratory chain. The immediate electron acceptor for the enzyme is believed to be ubiquinone. The protein is NADH-ubiquinone oxidoreductase chain 4 (MT-ND4) of Crotalus lepidus (Banded rock rattlesnake).